A 371-amino-acid chain; its full sequence is Chaperone protein DnaJ (371 aa).

Residues 5–69 form the J domain; that stretch reads DYYEVLGLSK…QKRAQYDQFG (65 aa). Residues 133–215 form a CR-type zinc finger; sequence GKELNVEIPV…CHGSSKVRKR (83 aa). C146, C149, C163, C166, C189, C192, C203, and C206 together coordinate Zn(2+). CXXCXGXG motif repeat units lie at residues 146–153, 163–170, 189–196, and 203–210; these read CDTCKGSG, CKHCSGSG, CGHCSGTG, and CTTCHGSS.

The protein belongs to the DnaJ family. Homodimer. Zn(2+) serves as cofactor.

The protein localises to the cytoplasm. Functionally, participates actively in the response to hyperosmotic and heat shock by preventing the aggregation of stress-denatured proteins and by disaggregating proteins, also in an autonomous, DnaK-independent fashion. Unfolded proteins bind initially to DnaJ; upon interaction with the DnaJ-bound protein, DnaK hydrolyzes its bound ATP, resulting in the formation of a stable complex. GrpE releases ADP from DnaK; ATP binding to DnaK triggers the release of the substrate protein, thus completing the reaction cycle. Several rounds of ATP-dependent interactions between DnaJ, DnaK and GrpE are required for fully efficient folding. Also involved, together with DnaK and GrpE, in the DNA replication of plasmids through activation of initiation proteins. The chain is Chaperone protein DnaJ from Bacillus cereus (strain ATCC 14579 / DSM 31 / CCUG 7414 / JCM 2152 / NBRC 15305 / NCIMB 9373 / NCTC 2599 / NRRL B-3711).